A 698-amino-acid chain; its full sequence is Glycine--tRNA ligase beta subunit (698 aa).

This sequence belongs to the class-II aminoacyl-tRNA synthetase family. In terms of assembly, tetramer of two alpha and two beta subunits.

It localises to the cytoplasm. The enzyme catalyses tRNA(Gly) + glycine + ATP = glycyl-tRNA(Gly) + AMP + diphosphate. The chain is Glycine--tRNA ligase beta subunit from Xanthomonas campestris pv. campestris (strain 8004).